A 1330-amino-acid polypeptide reads, in one-letter code: Major capsid protein (1330 aa).

Belongs to the herpesviridae major capsid protein family. Homomultimer. Makes the hexons and eleven out of twelve pentons. Interacts with triplex proteins 1/TRX1 and 2/TRX2; adjacent capsomers are linked together in groups of three by triplexes, heterotrimeric complexes composed of one molecule of TRX1 and two molecules of TRX2. Interacts with scaffold protein; this interaction allows efficient MCP transport to the host nucleus. Interacts with capsid vertex component 2/CVC2. Interacts with the small capsomere-interacting protein/SCP.

The protein resides in the virion. It localises to the host nucleus. Self-assembles to form an icosahedral capsid with a T=16 symmetry, about 200 nm in diameter, and consisting of 150 hexons and 12 pentons (total of 162 capsomers). Hexons form the edges and faces of the capsid and are each composed of six MCP molecules. In contrast, one penton is found at each of the 12 vertices. Eleven of the pentons are MCP pentamers, while the last vertex is occupied by the portal complex. The capsid is surrounded by a layer of proteinaceous material designated the tegument which, in turn, is enclosed in an envelope of host cell-derived lipids containing virus-encoded glycoproteins. This chain is Major capsid protein, found in Sus scrofa (Pig).